Consider the following 361-residue polypeptide: Phosphoserine aminotransferase (361 aa).

Arg-43 is an L-glutamate binding site. Pyridoxal 5'-phosphate is bound by residues 77-78 (AS), Trp-103, Thr-153, Asp-173, and Gln-196. At Lys-197 the chain carries N6-(pyridoxal phosphate)lysine. 238–239 (NT) contributes to the pyridoxal 5'-phosphate binding site.

This sequence belongs to the class-V pyridoxal-phosphate-dependent aminotransferase family. SerC subfamily. Homodimer. It depends on pyridoxal 5'-phosphate as a cofactor.

Its subcellular location is the cytoplasm. The catalysed reaction is O-phospho-L-serine + 2-oxoglutarate = 3-phosphooxypyruvate + L-glutamate. The enzyme catalyses 4-(phosphooxy)-L-threonine + 2-oxoglutarate = (R)-3-hydroxy-2-oxo-4-phosphooxybutanoate + L-glutamate. Its pathway is amino-acid biosynthesis; L-serine biosynthesis; L-serine from 3-phospho-D-glycerate: step 2/3. It functions in the pathway cofactor biosynthesis; pyridoxine 5'-phosphate biosynthesis; pyridoxine 5'-phosphate from D-erythrose 4-phosphate: step 3/5. In terms of biological role, catalyzes the reversible conversion of 3-phosphohydroxypyruvate to phosphoserine and of 3-hydroxy-2-oxo-4-phosphonooxybutanoate to phosphohydroxythreonine. The polypeptide is Phosphoserine aminotransferase (Azotobacter vinelandii (strain DJ / ATCC BAA-1303)).